Reading from the N-terminus, the 454-residue chain is UDP-N-acetylmuramoylalanine--D-glutamate ligase (454 aa).

Residue 115-121 participates in ATP binding; it reads GTNGKTT.

The protein belongs to the MurCDEF family.

Its subcellular location is the cytoplasm. The enzyme catalyses UDP-N-acetyl-alpha-D-muramoyl-L-alanine + D-glutamate + ATP = UDP-N-acetyl-alpha-D-muramoyl-L-alanyl-D-glutamate + ADP + phosphate + H(+). The protein operates within cell wall biogenesis; peptidoglycan biosynthesis. Cell wall formation. Catalyzes the addition of glutamate to the nucleotide precursor UDP-N-acetylmuramoyl-L-alanine (UMA). The polypeptide is UDP-N-acetylmuramoylalanine--D-glutamate ligase (Thermoanaerobacter pseudethanolicus (strain ATCC 33223 / 39E) (Clostridium thermohydrosulfuricum)).